A 136-amino-acid polypeptide reads, in one-letter code: Glutamyl-tRNA(Gln) amidotransferase subunit C, mitochondrial (136 aa).

The transit peptide at 1 to 27 directs the protein to the mitochondrion; the sequence is MWARAVHLGLRAAARGRRGFTSKADPQ.

This sequence belongs to the GatC family. Subunit of the heterotrimeric GatCAB amidotransferase (AdT) complex, composed of A (QRSL1), B (GATB) and C (GATC) subunits.

It localises to the mitochondrion. It catalyses the reaction L-glutamyl-tRNA(Gln) + L-glutamine + ATP + H2O = L-glutaminyl-tRNA(Gln) + L-glutamate + ADP + phosphate + H(+). Functionally, allows the formation of correctly charged Gln-tRNA(Gln) through the transamidation of misacylated Glu-tRNA(Gln) in the mitochondria. The reaction takes place in the presence of glutamine and ATP through an activated gamma-phospho-Glu-tRNA(Gln). This Bos taurus (Bovine) protein is Glutamyl-tRNA(Gln) amidotransferase subunit C, mitochondrial.